A 636-amino-acid polypeptide reads, in one-letter code: 1-phosphatidylinositol 4,5-bisphosphate phosphodiesterase zeta-1 (636 aa).

Residues 35–70 form the EF-hand domain; it reads CNTIHVKCIFKDNDRLKQGRITIEEFRTIYRIIAHR. Residues 155–299 enclose the PI-PLC X-box domain; the sequence is QDMTHPLSDY…LKFKILVRNK (145 aa). Catalysis depends on residues His-170 and His-215. The segment at 311-338 is disordered; that stretch reads KGFDKHGQVQECEEEEEAEQEEEENEVR. A coiled-coil region spans residues 318-345; that stretch reads QVQECEEEEEAEQEEEENEVRDSEILDI. Positions 321-336 are enriched in acidic residues; that stretch reads ECEEEEEAEQEEEENE. Positions 375–491 constitute a PI-PLC Y-box domain; the sequence is LSDLVIYTKV…GYILKPHFLR (117 aa). Residues 491–617 form the C2 domain; it reads RDGKSIFNPN…KGYRRVPLFS (127 aa).

In terms of assembly, interacts via its C2 domain with PtdIns(3)P and, to a lesser extent, PtdIns(5)P in vitro. Requires Ca(2+) as cofactor. Expressed specifically in testis.

It localises to the nucleus. Its subcellular location is the cytoplasm. It is found in the perinuclear region. It catalyses the reaction a 1,2-diacyl-sn-glycero-3-phospho-(1D-myo-inositol-4,5-bisphosphate) + H2O = 1D-myo-inositol 1,4,5-trisphosphate + a 1,2-diacyl-sn-glycerol + H(+). The production of the second messenger molecules diacylglycerol (DAG) and inositol 1,4,5-trisphosphate (IP3) is mediated by activated phosphatidylinositol-specific phospholipase C enzymes. In vitro, hydrolyzes PtdIns(4,5)P2 in a Ca(2+)-dependent manner. Triggers intracellular Ca(2+) oscillations in oocytes solely during M phase and is involved in inducing oocyte activation and initiating embryonic development up to the blastocyst stage. Is therefore a strong candidate for the egg-activating soluble sperm factor that is transferred from the sperm into the egg cytoplasm following gamete membrane fusion. May exert an inhibitory effect on phospholipase-C-coupled processes that depend on calcium ions and protein kinase C, including CFTR trafficking and function. The chain is 1-phosphatidylinositol 4,5-bisphosphate phosphodiesterase zeta-1 from Sus scrofa (Pig).